A 530-amino-acid chain; its full sequence is UDP-glucuronosyltransferase 2B17 (530 aa).

Residues 1–23 form the signal peptide; that stretch reads MPGKWISALLLLQISCCFRSVKC. 2 N-linked (GlcNAc...) asparagine glycosylation sites follow: asparagine 316 and asparagine 483. A helical membrane pass occupies residues 494–510; the sequence is VIGFLLSCVATTIVLSV.

This sequence belongs to the UDP-glycosyltransferase family.

The protein localises to the endoplasmic reticulum membrane. The enzyme catalyses glucuronate acceptor + UDP-alpha-D-glucuronate = acceptor beta-D-glucuronoside + UDP + H(+). It catalyses the reaction 17alpha-estradiol + UDP-alpha-D-glucuronate = 17alpha-estradiol 3-O-(beta-D-glucuronate) + UDP + H(+). The catalysed reaction is 17alpha-estradiol + UDP-alpha-D-glucuronate = 17alpha-estradiol 17-O-(beta-D-glucuronate) + UDP + H(+). It carries out the reaction 17beta-estradiol + UDP-alpha-D-glucuronate = 17beta-estradiol 17-O-(beta-D-glucuronate) + UDP + H(+). The enzyme catalyses 17beta-hydroxy-5alpha-androstan-3-one + UDP-alpha-D-glucuronate = 5alpha-dihydrotestosterone 17-O-(beta-D-glucuronate) + UDP + H(+). It catalyses the reaction testosterone + UDP-alpha-D-glucuronate = testosterone 17-O-(beta-D-glucuronate) + UDP + H(+). Functionally, UDP-glucuronosyltransferase (UGT) that catalyzes phase II biotransformation reactions in which lipophilic substrates are conjugated with glucuronic acid to increase the metabolite's water solubility, thereby facilitating excretion into either the urine or bile. Catalyzes the glucuronidation of endogenous steroid hormones such as androgens (epitestosterone, androsterone) and estrogens (estradiol, epiestradiol). This Mus musculus (Mouse) protein is UDP-glucuronosyltransferase 2B17.